Consider the following 163-residue polypeptide: Small ribosomal subunit protein uS9 (163 aa).

The tract at residues 1–41 is disordered; sequence MAENTNDSAVLETEEELTSYTTETNAGAGTGTSTIAPGYGT. Low complexity predominate over residues 18–38; that stretch reads TSYTTETNAGAGTGTSTIAPG.

Belongs to the universal ribosomal protein uS9 family.

The sequence is that of Small ribosomal subunit protein uS9 from Bifidobacterium adolescentis (strain ATCC 15703 / DSM 20083 / NCTC 11814 / E194a).